The following is a 160-amino-acid chain: MAQHRISHISLDENTILWRNADIEQERRVAIYDLIEENTFKPVRSNAAGHTGPYRLHLSVQDGRLAMDIRDRDDEELEMLILGLARFRRPIREYFAICDSYYQAIRKATPSEIETIDMARRGVHNHAAELLIERLEGKVETDFPTARRLFTLICVLHIKG.

Belongs to the UPF0262 family.

This is UPF0262 protein ELI_10965 from Erythrobacter litoralis (strain HTCC2594).